A 475-amino-acid polypeptide reads, in one-letter code: Glutamyl-tRNA(Gln) amidotransferase subunit A (475 aa).

Residues Lys76 and Ser151 each act as charge relay system in the active site. Ser175 functions as the Acyl-ester intermediate in the catalytic mechanism.

This sequence belongs to the amidase family. GatA subfamily. As to quaternary structure, heterotrimer of A, B and C subunits.

It catalyses the reaction L-glutamyl-tRNA(Gln) + L-glutamine + ATP + H2O = L-glutaminyl-tRNA(Gln) + L-glutamate + ADP + phosphate + H(+). In terms of biological role, allows the formation of correctly charged Gln-tRNA(Gln) through the transamidation of misacylated Glu-tRNA(Gln) in organisms which lack glutaminyl-tRNA synthetase. The reaction takes place in the presence of glutamine and ATP through an activated gamma-phospho-Glu-tRNA(Gln). This is Glutamyl-tRNA(Gln) amidotransferase subunit A from Pelodictyon phaeoclathratiforme (strain DSM 5477 / BU-1).